The chain runs to 511 residues: Bifunctional purine biosynthesis protein PurH (511 aa).

An MGS-like domain is found at 1-146 (MARLALLSVS…KNFAHTTVLT (146 aa)).

It belongs to the PurH family.

The enzyme catalyses (6R)-10-formyltetrahydrofolate + 5-amino-1-(5-phospho-beta-D-ribosyl)imidazole-4-carboxamide = 5-formamido-1-(5-phospho-D-ribosyl)imidazole-4-carboxamide + (6S)-5,6,7,8-tetrahydrofolate. It carries out the reaction IMP + H2O = 5-formamido-1-(5-phospho-D-ribosyl)imidazole-4-carboxamide. It participates in purine metabolism; IMP biosynthesis via de novo pathway; 5-formamido-1-(5-phospho-D-ribosyl)imidazole-4-carboxamide from 5-amino-1-(5-phospho-D-ribosyl)imidazole-4-carboxamide (10-formyl THF route): step 1/1. Its pathway is purine metabolism; IMP biosynthesis via de novo pathway; IMP from 5-formamido-1-(5-phospho-D-ribosyl)imidazole-4-carboxamide: step 1/1. The polypeptide is Bifunctional purine biosynthesis protein PurH (Synechocystis sp. (strain ATCC 27184 / PCC 6803 / Kazusa)).